We begin with the raw amino-acid sequence, 444 residues long: Tubulin beta chain (444 aa).

The GTP site is built by Q11, E69, S138, G142, T143, G144, N204, and N226. Residue E69 coordinates Mg(2+).

This sequence belongs to the tubulin family. As to quaternary structure, dimer of alpha and beta chains. A typical microtubule is a hollow water-filled tube with an outer diameter of 25 nm and an inner diameter of 15 nM. Alpha-beta heterodimers associate head-to-tail to form protofilaments running lengthwise along the microtubule wall with the beta-tubulin subunit facing the microtubule plus end conferring a structural polarity. Microtubules usually have 13 protofilaments but different protofilament numbers can be found in some organisms and specialized cells. Mg(2+) is required as a cofactor.

It localises to the cytoplasm. It is found in the cytoskeleton. Tubulin is the major constituent of microtubules, a cylinder consisting of laterally associated linear protofilaments composed of alpha- and beta-tubulin heterodimers. Microtubules grow by the addition of GTP-tubulin dimers to the microtubule end, where a stabilizing cap forms. Below the cap, tubulin dimers are in GDP-bound state, owing to GTPase activity of alpha-tubulin. This chain is Tubulin beta chain, found in Euplotoides octocarinatus (Freshwater ciliate).